Reading from the N-terminus, the 362-residue chain is Histidinol-phosphate aminotransferase (362 aa).

Lysine 218 is modified (N6-(pyridoxal phosphate)lysine).

Belongs to the class-II pyridoxal-phosphate-dependent aminotransferase family. Histidinol-phosphate aminotransferase subfamily. Homodimer. Requires pyridoxal 5'-phosphate as cofactor.

It catalyses the reaction L-histidinol phosphate + 2-oxoglutarate = 3-(imidazol-4-yl)-2-oxopropyl phosphate + L-glutamate. The protein operates within amino-acid biosynthesis; L-histidine biosynthesis; L-histidine from 5-phospho-alpha-D-ribose 1-diphosphate: step 7/9. The sequence is that of Histidinol-phosphate aminotransferase from Xanthomonas campestris pv. campestris (strain ATCC 33913 / DSM 3586 / NCPPB 528 / LMG 568 / P 25).